A 274-amino-acid polypeptide reads, in one-letter code: Shikimate dehydrogenase (NADP(+)) (274 aa).

Shikimate-binding positions include 14–16 (SKS) and Thr-60. Lys-64 functions as the Proton acceptor in the catalytic mechanism. Glu-76 is an NADP(+) binding site. Residues Asn-85 and Asp-101 each coordinate shikimate. NADP(+) contacts are provided by residues 126–130 (GAGGA), 150–155 (NRTAEK), and Met-214. Position 216 (Tyr-216) interacts with shikimate. Gly-238 contacts NADP(+).

Belongs to the shikimate dehydrogenase family. As to quaternary structure, homodimer.

It carries out the reaction shikimate + NADP(+) = 3-dehydroshikimate + NADPH + H(+). The protein operates within metabolic intermediate biosynthesis; chorismate biosynthesis; chorismate from D-erythrose 4-phosphate and phosphoenolpyruvate: step 4/7. In terms of biological role, involved in the biosynthesis of the chorismate, which leads to the biosynthesis of aromatic amino acids. Catalyzes the reversible NADPH linked reduction of 3-dehydroshikimate (DHSA) to yield shikimate (SA). The polypeptide is Shikimate dehydrogenase (NADP(+)) (Pseudomonas paraeruginosa (strain DSM 24068 / PA7) (Pseudomonas aeruginosa (strain PA7))).